The sequence spans 246 residues: tRNA (guanine-N(1)-)-methyltransferase (246 aa).

Glycine 114 provides a ligand contact to S-adenosyl-L-methionine.

Belongs to the RNA methyltransferase TrmD family. In terms of assembly, homodimer.

The protein localises to the cytoplasm. The enzyme catalyses guanosine(37) in tRNA + S-adenosyl-L-methionine = N(1)-methylguanosine(37) in tRNA + S-adenosyl-L-homocysteine + H(+). Functionally, specifically methylates guanosine-37 in various tRNAs. This chain is tRNA (guanine-N(1)-)-methyltransferase, found in Novosphingobium aromaticivorans (strain ATCC 700278 / DSM 12444 / CCUG 56034 / CIP 105152 / NBRC 16084 / F199).